The primary structure comprises 118 residues: Large ribosomal subunit protein bL19 (118 aa).

This sequence belongs to the bacterial ribosomal protein bL19 family.

Functionally, this protein is located at the 30S-50S ribosomal subunit interface and may play a role in the structure and function of the aminoacyl-tRNA binding site. This Geobacter metallireducens (strain ATCC 53774 / DSM 7210 / GS-15) protein is Large ribosomal subunit protein bL19.